The sequence spans 1531 residues: MALTPQRGSSSGLSRPELWLLLWAAAWRLGATACPALCTCTGTTVDCHGTGLQAIPKNIPRNTERLELNGNNITRIHKNDFAGLKQLRVLQLMENQIGAVERGAFDDMKELERLRLNRNQLQVLPELLFQNNQALSRLDLSENSLQAVPRKAFRGATDLKNLQLDKNQISCIEEGAFRALRGLEVLTLNNNNITTIPVSSFNHMPKLRTFRLHSNHLFCDCHLAWLSQWLRQRPTIGLFTQCSGPASLRGLNVAEVQKSEFSCSGQGEAAQVPACTLSSGSCPAMCSCSNGIVDCRGKGLTAIPANLPETMTEIRLELNGIKSIPPGAFSPYRKLRRIDLSNNQIAEIAPDAFQGLRSLNSLVLYGNKITDLPRGVFGGLYTLQLLLLNANKINCIRPDAFQDLQNLSLLSLYDNKIQSLAKGTFTSLRAIQTLHLAQNPFICDCNLKWLADFLRTNPIETTGARCASPRRLANKRIGQIKSKKFRCSAKEQYFIPGTEDYHLNSECTSDVACPHKCRCEASVVECSGLKLSKIPERIPQSTTELRLNNNEISILEATGLFKKLSHLKKINLSNNKVSEIEDGTFEGATSVSELHLTANQLESVRSGMFRGLDGLRTLMLRNNRISCIHNDSFTGLRNVRLLSLYDNHITTISPGAFDTLQALSTLNLLANPFNCNCQLAWLGDWLRKRKIVTGNPRCQNPDFLRQIPLQDVAFPDFRCEEGQEEVGCLPRPQCPQECACLDTVVRCSNKHLQALPKGIPKNVTELYLDGNQFTLVPGQLSTFKYLQLVDLSNNKISSLSNSSFTNMSQLTTLILSYNALQCIPPLAFQGLRSLRLLSLHGNDVSTLQEGIFADVTSLSHLAIGANPLYCDCHLRWLSSWVKTGYKEPGIARCAGPPEMEGKLLLTTPAKKFECQGPPSLAVQAKCDPCLSSPCQNQGTCHNDPLEVYRCTCPSGYKGRNCEVSLDSCSSNPCGNGGTCHAQEGEDAGFTCSCPSGFEGLTCGMNTDDCVKHDCVNGGVCVDGIGNYTCQCPLQYTGRACEQLVDFCSPDLNPCQHEAQCVGTPEGPRCECVPGYTGDNCSKNQDDCKDHQCQNGAQCVDEINSYACLCAEGYSGQLCEIPPAPRNSCEGTECQNGANCVDQGSRPVCQCLPGFGGPECEKLLSVNFVDRDTYLQFTDLQNWPRANITLQVSTAEDNGILLYNGDNDHIAVELYQGHVRVSYDPGSYPSSAIYSAETINDGQFHTVELVTFDQMVNLSIDGGSPMTMDNFGKHYTLNSEAPLYVGGMPVDVNSAAFRLWQILNGTSFHGCIRNLYINNELQDFTKTQMKPGVVPGCEPCRKLYCLHGICQPNATPGPVCHCEAGWGGLHCDQPVDGPCHGHKCVHGKCVPLDALAYSCQCQDGYSGALCNQVGAVAEPCGGLQCLHGHCQASATRGAHCVCSPGFSGELCEQESECRGDPVRDFHRVQRGYAICQTTRPLSWVECRGACPGQGCCQGLRLKRRKLTFECSDGTSFAEEVEKPTKCGCAPCA.

The N-terminal stretch at 1-33 is a signal peptide; it reads MALTPQRGSSSGLSRPELWLLLWAAAWRLGATA. The LRRNT domain maps to 34–61; it reads CPALCTCTGTTVDCHGTGLQAIPKNIPR. LRR repeat units follow at residues 62–83, 86–107, 110–131, 134–155, 158–179, and 182–203; these read NTER…DFAG, QLRV…AFDD, ELER…LFQN, ALSR…AFRG, DLKN…AFRA, and GLEV…SFNH. Asn72 carries N-linked (GlcNAc...) asparagine glycosylation. N-linked (GlcNAc...) asparagine glycosylation is present at Asn192. Residues 215–265 form the LRRCT 1 domain; sequence NHLFCDCHLAWLSQWLRQRPTIGLFTQCSGPASLRGLNVAEVQKSEFSCSG. Residues 273 to 309 form the LRRNT 2 domain; it reads PACTLSSGSCPAMCSCSNGIVDCRGKGLTAIPANLPE. The cysteines at positions 286 and 295 are disulfide-linked. LRR repeat units follow at residues 310–331, 334–355, 358–379, 382–403, and 406–427; these read TMTE…AFSP, KLRR…AFQG, SLNS…VFGG, TLQL…AFQD, and NLSL…TFTS. The N-linked (GlcNAc...) asparagine glycan is linked to Asn406. An LRRCT 2 domain is found at 439-489; the sequence is NPFICDCNLKWLADFLRTNPIETTGARCASPRRLANKRIGQIKSKKFRCSA. Disulfide bonds link Cys443-Cys466, Cys445-Cys487, Cys513-Cys519, and Cys517-Cys526. Residues 504–540 enclose the LRRNT 3 domain; it reads NSECTSDVACPHKCRCEASVVECSGLKLSKIPERIPQ. 5 LRR repeats span residues 541–562, 566–587, 590–611, 614–635, and 638–659; these read STTE…GLFK, HLKK…TFEG, SVSE…MFRG, GLRT…SFTG, and NVRL…AFDT. Residue Asn571 is glycosylated (N-linked (GlcNAc...) asparagine). An N-linked (GlcNAc...) asparagine glycan is attached at Asn630. The region spanning 671–721 is the LRRCT 3 domain; sequence NPFNCNCQLAWLGDWLRKRKIVTGNPRCQNPDFLRQIPLQDVAFPDFRCEE. 2 disulfides stabilise this stretch: Cys675/Cys698 and Cys677/Cys719. The region spanning 725–761 is the LRRNT 4 domain; the sequence is EVGCLPRPQCPQECACLDTVVRCSNKHLQALPKGIPK. Asn762, Asn801, and Asn806 each carry an N-linked (GlcNAc...) asparagine glycan. 4 LRR repeats span residues 762 to 783, 785 to 806, 809 to 830, and 833 to 854; these read NVTE…LSTF, YLQL…SFTN, QLTT…AFQG, and SLRL…IFAD. The region spanning 866–916 is the LRRCT 4 domain; that stretch reads NPLYCDCHLRWLSSWVKTGYKEPGIARCAGPPEMEGKLLLTTPAKKFECQG. EGF-like domains are found at residues 927 to 962, 964 to 1003, 1005 to 1041, 1043 to 1081, 1083 to 1119, and 1124 to 1160; these read DPCL…RNCE, SLDS…LTCG, NTDD…RACE, LVDF…DNCS, NQDD…QLCE, and PRNS…PECE. Cystine bridges form between Cys929-Cys940, Cys934-Cys950, Cys952-Cys961, Cys968-Cys979, Cys973-Cys991, Cys993-Cys1002, Cys1009-Cys1020, Cys1014-Cys1029, Cys1031-Cys1040, Cys1047-Cys1060, Cys1054-Cys1069, Cys1071-Cys1080, Cys1087-Cys1098, Cys1092-Cys1107, Cys1109-Cys1118, Cys1128-Cys1139, Cys1133-Cys1148, and Cys1150-Cys1159. Asn1026 is a glycosylation site (N-linked (GlcNAc...) asparagine). Asn1079 is a glycosylation site (N-linked (GlcNAc...) asparagine). Residues 1163-1336 enclose the Laminin G-like domain; it reads LSVNFVDRDT…QMKPGVVPGC (174 aa). Asn1186, Asn1256, and Asn1303 each carry an N-linked (GlcNAc...) asparagine glycan. 14 disulfides stabilise this stretch: Cys1310–Cys1336, Cys1339–Cys1349, Cys1344–Cys1359, Cys1361–Cys1370, Cys1378–Cys1388, Cys1383–Cys1398, Cys1400–Cys1409, Cys1419–Cys1429, Cys1424–Cys1439, Cys1441–Cys1450, Cys1456–Cys1495, Cys1474–Cys1509, Cys1485–Cys1525, and Cys1489–Cys1527. EGF-like domains lie at 1337–1371, 1374–1410, and 1415–1451; these read EPCR…LHCD, VDGP…ALCN, and VAEP…ELCE. Residues 1456–1531 enclose the CTCK domain; that stretch reads CRGDPVRDFH…PTKCGCAPCA (76 aa).

As to quaternary structure, interacts with ROBO1 and GREM1. In adult brains expressed in the hippocampus, cerebral cortex, and olfactory bulb but not in the cerebellum. In embryo expressed in cerebral cortex.

The protein localises to the secreted. Functionally, thought to act as molecular guidance cue in cellular migration, and function appears to be mediated by interaction with roundabout homolog receptors. During neural development involved in axonal navigation at the ventral midline of the neural tube and projection of axons to different regions. SLIT1 and SLIT2 together seem to be essential for midline guidance in the forebrain by acting as repulsive signal preventing inappropriate midline crossing by axons projecting from the olfactory bulb. The chain is Slit homolog 1 protein (Slit1) from Rattus norvegicus (Rat).